A 123-amino-acid polypeptide reads, in one-letter code: WAP four-disulfide core domain protein 5 (123 aa).

An N-terminal signal peptide occupies residues 1–24 (MRIQSLLLLGALLAVGSQLPAVFG). 2 consecutive WAP domains span residues 27–73 (KGEK…CIPR) and 74–121 (VSVK…RDPA). Cystine bridges form between Cys34/Cys62, Cys41/Cys66, Cys49/Cys61, Cys55/Cys70, Cys81/Cys109, Cys88/Cys113, Cys96/Cys108, and Cys102/Cys117.

The protein resides in the secreted. Putative acid-stable proteinase inhibitor. This Macaca mulatta (Rhesus macaque) protein is WAP four-disulfide core domain protein 5 (WFDC5).